The following is a 157-amino-acid chain: Peptide methionine sulfoxide reductase MsrA (157 aa).

Cys-10 is a catalytic residue.

This sequence belongs to the MsrA Met sulfoxide reductase family.

The catalysed reaction is L-methionyl-[protein] + [thioredoxin]-disulfide + H2O = L-methionyl-(S)-S-oxide-[protein] + [thioredoxin]-dithiol. It catalyses the reaction [thioredoxin]-disulfide + L-methionine + H2O = L-methionine (S)-S-oxide + [thioredoxin]-dithiol. In terms of biological role, has an important function as a repair enzyme for proteins that have been inactivated by oxidation. Catalyzes the reversible oxidation-reduction of methionine sulfoxide in proteins to methionine. This is Peptide methionine sulfoxide reductase MsrA from Clostridium perfringens (strain ATCC 13124 / DSM 756 / JCM 1290 / NCIMB 6125 / NCTC 8237 / Type A).